The sequence spans 159 residues: MDKPRKENEEEPQSAPKTDEERPPVEHSPEKQSPEEQSSEEQSSEEEFFPEELLPELLPEMLLSEERPPQEGLSRKDLFEGRPPMEQPPCGVGKHKLEEGSFKERLARSRPQFKGDIHGRNLSNEEMIQAADELEEMKRVRNKLMIMHWKAKRSRPYPI.

Positions 1 to 121 (MDKPRKENEE…QFKGDIHGRN (121 aa)) are disordered. Basic and acidic residues predominate over residues 17–34 (KTDEERPPVEHSPEKQSP). The segment covering 37 to 54 (QSSEEQSSEEEFFPEELL) has biased composition (acidic residues). Composition is skewed to basic and acidic residues over residues 64–80 (SEERPPQEGLSRKDLFE) and 95–119 (HKLEEGSFKERLARSRPQFKGDIHG).

This sequence belongs to the TFS-II family. TFA subfamily.

It localises to the nucleus. Functionally, may be involved in transcriptional regulation. Modulates various viral and cellular promoters in a promoter context-dependent manner. Does not bind DNA directly. In Gorilla gorilla gorilla (Western lowland gorilla), this protein is Transcription elongation factor A protein-like 1.